The sequence spans 112 residues: Protein BEX3 (112 aa).

A disordered region spans residues 1–45 (MANIHQENEEMEQPVQNGEEDRPLGGGEGHQPERNHRRGQARRLA). The tract at residues 69–94 (EIFMEEMREIRRKLRELQLRNCLRIL) is interaction with p75NTR/NGFR. Positions 69-112 (EIFMEEMREIRRKLRELQLRNCLRILMGELSNHHDHHDEFCLMP) are interaction with 14-3-3 epsilon. The Nuclear export signal motif lies at 78 to 88 (IRRKLRELQLR). Residues 101 to 105 (HHDHH) are his cluster. Cys-109 contributes to the Zn(2+) binding site.

Belongs to the BEX family. Self-associates. Binds to the DEATH domain of p75NTR/NGFR. Interacts with 14-3-3 epsilon (YWHAE). Interacts with DIABLO/SMAC. In terms of processing, ubiquitinated. Degraded by the proteasome.

It localises to the nucleus. The protein localises to the cytoplasm. Its subcellular location is the cytosol. May be a signaling adapter molecule involved in NGFR/p75NTR-mediated apoptosis induced by NGF. Plays a role in zinc-triggered neuronal death. In absence of reductive stress, acts as a pseudosubstrate for the CRL2(FEM1B) complex: associates with FEM1B via zinc, thereby preventing association between FEM1B and its substrates. The chain is Protein BEX3 from Bos taurus (Bovine).